The chain runs to 328 residues: GMP reductase (328 aa).

The active-site Thioimidate intermediate is the Cys176. 205-228 (IIADGGIRTHGDIAKSIRFGASMI) contributes to the NADP(+) binding site.

It belongs to the IMPDH/GMPR family. GuaC type 2 subfamily.

It carries out the reaction IMP + NH4(+) + NADP(+) = GMP + NADPH + 2 H(+). Its function is as follows. Catalyzes the irreversible NADPH-dependent deamination of GMP to IMP. It functions in the conversion of nucleobase, nucleoside and nucleotide derivatives of G to A nucleotides, and in maintaining the intracellular balance of A and G nucleotides. This Streptococcus pneumoniae serotype 19F (strain G54) protein is GMP reductase.